The primary structure comprises 190 residues: Pyridoxal 5'-phosphate synthase subunit PdxT (190 aa).

Position 46 to 48 (46 to 48 (GES)) interacts with L-glutamine. Residue Cys-78 is the Nucleophile of the active site. Residues Arg-106 and 135-136 (IR) contribute to the L-glutamine site. Residues His-171 and Glu-173 each act as charge relay system in the active site.

It belongs to the glutaminase PdxT/SNO family. In terms of assembly, in the presence of PdxS, forms a dodecamer of heterodimers. Only shows activity in the heterodimer.

The enzyme catalyses aldehydo-D-ribose 5-phosphate + D-glyceraldehyde 3-phosphate + L-glutamine = pyridoxal 5'-phosphate + L-glutamate + phosphate + 3 H2O + H(+). It catalyses the reaction L-glutamine + H2O = L-glutamate + NH4(+). The protein operates within cofactor biosynthesis; pyridoxal 5'-phosphate biosynthesis. Its function is as follows. Catalyzes the hydrolysis of glutamine to glutamate and ammonia as part of the biosynthesis of pyridoxal 5'-phosphate. The resulting ammonia molecule is channeled to the active site of PdxS. This is Pyridoxal 5'-phosphate synthase subunit PdxT from Dictyoglomus turgidum (strain DSM 6724 / Z-1310).